Consider the following 335-residue polypeptide: tRNA N6-adenosine threonylcarbamoyltransferase (335 aa).

The a divalent metal cation site is built by His109, His113, and Tyr130. Substrate contacts are provided by residues 130–134, Asp162, Gly177, Glu181, and Asn266; that span reads YVSGG. Asp294 contributes to the a divalent metal cation binding site.

Belongs to the KAE1 / TsaD family. Component of the EKC/KEOPS complex composed of at least GON7, TP53RK, TPRKB, OSGEP and LAGE3; the whole complex dimerizes. Interacts with PRAME. Requires a divalent metal cation as cofactor. As to expression, widely expressed at low level. Expressed in heart, placenta, liver, kidney, lung, brain, skeletal muscle and pancreas.

Its subcellular location is the cytoplasm. The protein localises to the nucleus. The enzyme catalyses L-threonylcarbamoyladenylate + adenosine(37) in tRNA = N(6)-L-threonylcarbamoyladenosine(37) in tRNA + AMP + H(+). Its function is as follows. Component of the EKC/KEOPS complex that is required for the formation of a threonylcarbamoyl group on adenosine at position 37 (t(6)A37) in tRNAs that read codons beginning with adenine. The complex is probably involved in the transfer of the threonylcarbamoyl moiety of threonylcarbamoyl-AMP (TC-AMP) to the N6 group of A37. OSGEP likely plays a direct catalytic role in this reaction, but requires other protein(s) of the complex to fulfill this activity. This chain is tRNA N6-adenosine threonylcarbamoyltransferase, found in Homo sapiens (Human).